Reading from the N-terminus, the 780-residue chain is Probable trehalase (780 aa).

The disordered stretch occupies residues Met1 to His48. Phosphoserine is present on residues Ser52 and Ser53. Thr88 is subject to Phosphothreonine. Position 112 is a phosphoserine (Ser112). Substrate-binding positions include Arg331, Trp338–Asp339, Asn375, Arg384, Arg384–Gln386, and Gly505. Catalysis depends on proton donor/acceptor residues Asp507 and Glu703.

This sequence belongs to the glycosyl hydrolase 37 family.

It carries out the reaction alpha,alpha-trehalose + H2O = alpha-D-glucose + beta-D-glucose. The polypeptide is Probable trehalase (NTH2) (Saccharomyces cerevisiae (strain ATCC 204508 / S288c) (Baker's yeast)).